A 211-amino-acid chain; its full sequence is Chaperone protein TorD (211 aa).

This sequence belongs to the TorD/DmsD family. TorD subfamily.

It is found in the cytoplasm. Its function is as follows. Involved in the biogenesis of TorA. Acts on TorA before the insertion of the molybdenum cofactor and, as a result, probably favors a conformation of the apoenzyme that is competent for acquiring the cofactor. This is Chaperone protein TorD from Shewanella loihica (strain ATCC BAA-1088 / PV-4).